The following is a 99-amino-acid chain: Small ribosomal subunit protein uS19c (99 aa).

This sequence belongs to the universal ribosomal protein uS19 family.

It is found in the plastid. It localises to the chloroplast. In terms of biological role, protein S19 forms a complex with S13 that binds strongly to the 16S ribosomal RNA. This chain is Small ribosomal subunit protein uS19c, found in Oenothera biennis (German evening primrose).